We begin with the raw amino-acid sequence, 54 residues long: uncharacterized protein (54 aa).

Positions Met1–Ala21 are cleaved as a signal peptide. The Extracellular portion of the chain corresponds to Gly22–Thr29. A helical transmembrane segment spans residues Ile30–Ile50. Over Ser51–Lys54 the chain is Cytoplasmic.

Its subcellular location is the membrane. This is an uncharacterized protein from Dictyostelium discoideum (Social amoeba).